A 335-amino-acid polypeptide reads, in one-letter code: Adenosine deaminase (335 aa).

Residues His12 and His14 each coordinate Zn(2+). Substrate-binding residues include His14 and Asp16. His197 contacts Zn(2+). Glu200 functions as the Proton donor in the catalytic mechanism. Residue Asp278 coordinates Zn(2+).

This sequence belongs to the metallo-dependent hydrolases superfamily. Adenosine and AMP deaminases family. Adenosine deaminase subfamily. Zn(2+) serves as cofactor.

The enzyme catalyses adenosine + H2O + H(+) = inosine + NH4(+). It carries out the reaction 2'-deoxyadenosine + H2O + H(+) = 2'-deoxyinosine + NH4(+). Its function is as follows. Catalyzes the hydrolytic deamination of adenosine and 2-deoxyadenosine. In Clostridium botulinum (strain Langeland / NCTC 10281 / Type F), this protein is Adenosine deaminase.